The sequence spans 31 residues: CKMSEQGLNAQMKAQIVDLHNXARQGVANGQ.

The protein belongs to the CRISP family. Venom allergen 5-like subfamily. Post-translationally, contains 3 disulfide bonds. In terms of tissue distribution, expressed by the venom gland.

It localises to the secreted. The sequence is that of Scolopendra 20566.01 Da toxin from Scolopendra angulata (Barbados giant red centipede).